The following is a 391-amino-acid chain: Ribonucleoside-diphosphate reductase small chain (391 aa).

The Fe cation site is built by Asp135, Glu166, and His169. Tyr173 is an active-site residue. Glu229, Glu263, and His266 together coordinate Fe cation.

It belongs to the ribonucleoside diphosphate reductase small chain family. Heterodimer of a large and a small subunit. Fe cation serves as cofactor.

The protein resides in the nucleus. It is found in the cytoplasm. The catalysed reaction is a 2'-deoxyribonucleoside 5'-diphosphate + [thioredoxin]-disulfide + H2O = a ribonucleoside 5'-diphosphate + [thioredoxin]-dithiol. Provides the precursors necessary for DNA synthesis. Catalyzes the biosynthesis of deoxyribonucleotides from the corresponding ribonucleotides. The protein is Ribonucleoside-diphosphate reductase small chain (suc22) of Schizosaccharomyces pombe (strain 972 / ATCC 24843) (Fission yeast).